We begin with the raw amino-acid sequence, 640 residues long: Threonine--tRNA ligase (640 aa).

Residues methionine 1–threonine 61 enclose the TGS domain. A catalytic region spans residues aspartate 242–proline 533. Cysteine 333, histidine 384, and histidine 510 together coordinate Zn(2+).

Belongs to the class-II aminoacyl-tRNA synthetase family. Homodimer. It depends on Zn(2+) as a cofactor.

It localises to the cytoplasm. It catalyses the reaction tRNA(Thr) + L-threonine + ATP = L-threonyl-tRNA(Thr) + AMP + diphosphate + H(+). In terms of biological role, catalyzes the attachment of threonine to tRNA(Thr) in a two-step reaction: L-threonine is first activated by ATP to form Thr-AMP and then transferred to the acceptor end of tRNA(Thr). Also edits incorrectly charged L-seryl-tRNA(Thr). The chain is Threonine--tRNA ligase from Pseudomonas putida (strain W619).